Reading from the N-terminus, the 55-residue chain is DNA-directed RNA polymerase subunit Rpo10 (55 aa).

Zn(2+) is bound by residues Cys-6, Cys-9, Cys-43, and Cys-44.

This sequence belongs to the archaeal Rpo10/eukaryotic RPB10 RNA polymerase subunit family. Part of the RNA polymerase complex. Requires Zn(2+) as cofactor.

The protein resides in the cytoplasm. It catalyses the reaction RNA(n) + a ribonucleoside 5'-triphosphate = RNA(n+1) + diphosphate. DNA-dependent RNA polymerase (RNAP) catalyzes the transcription of DNA into RNA using the four ribonucleoside triphosphates as substrates. This Methanothermobacter thermautotrophicus (strain ATCC 29096 / DSM 1053 / JCM 10044 / NBRC 100330 / Delta H) (Methanobacterium thermoautotrophicum) protein is DNA-directed RNA polymerase subunit Rpo10.